A 100-amino-acid chain; its full sequence is Urease subunit gamma (100 aa).

It belongs to the urease gamma subunit family. As to quaternary structure, heterotrimer of UreA (gamma), UreB (beta) and UreC (alpha) subunits. Three heterotrimers associate to form the active enzyme.

The protein resides in the cytoplasm. The enzyme catalyses urea + 2 H2O + H(+) = hydrogencarbonate + 2 NH4(+). It functions in the pathway nitrogen metabolism; urea degradation; CO(2) and NH(3) from urea (urease route): step 1/1. This Ralstonia nicotianae (strain ATCC BAA-1114 / GMI1000) (Ralstonia solanacearum) protein is Urease subunit gamma.